A 257-amino-acid chain; its full sequence is Transmembrane protein C257L (257 aa).

The next 2 helical transmembrane spans lie at 123–143 (LELL…FTAL) and 163–183 (IMIF…YVLV).

This sequence belongs to the asfivirus C257R family.

Its subcellular location is the host membrane. The protein localises to the virion. In African swine fever virus (isolate Pig/Kenya/KEN-50/1950) (ASFV), this protein is Transmembrane protein C257L.